The chain runs to 767 residues: Phosphoribosylformylglycinamidine synthase subunit PurL (767 aa).

The active site involves His-65. ATP is bound by residues Tyr-68 and Lys-112. Glu-114 lines the Mg(2+) pocket. Substrate contacts are provided by residues Ser-115 to His-118 and Arg-137. The active-site Proton acceptor is the His-116. Asp-138 provides a ligand contact to Mg(2+). Gln-262 serves as a coordination point for substrate. Asp-290 lines the Mg(2+) pocket. Glu-334–Gln-336 provides a ligand contact to substrate. The ATP site is built by Asp-522 and Gly-559. Mg(2+) is bound at residue Asn-560. Ser-562 lines the substrate pocket.

The protein belongs to the FGAMS family. As to quaternary structure, monomer. Part of the FGAM synthase complex composed of 1 PurL, 1 PurQ and 2 PurS subunits.

It is found in the cytoplasm. It carries out the reaction N(2)-formyl-N(1)-(5-phospho-beta-D-ribosyl)glycinamide + L-glutamine + ATP + H2O = 2-formamido-N(1)-(5-O-phospho-beta-D-ribosyl)acetamidine + L-glutamate + ADP + phosphate + H(+). It participates in purine metabolism; IMP biosynthesis via de novo pathway; 5-amino-1-(5-phospho-D-ribosyl)imidazole from N(2)-formyl-N(1)-(5-phospho-D-ribosyl)glycinamide: step 1/2. Its function is as follows. Part of the phosphoribosylformylglycinamidine synthase complex involved in the purines biosynthetic pathway. Catalyzes the ATP-dependent conversion of formylglycinamide ribonucleotide (FGAR) and glutamine to yield formylglycinamidine ribonucleotide (FGAM) and glutamate. The FGAM synthase complex is composed of three subunits. PurQ produces an ammonia molecule by converting glutamine to glutamate. PurL transfers the ammonia molecule to FGAR to form FGAM in an ATP-dependent manner. PurS interacts with PurQ and PurL and is thought to assist in the transfer of the ammonia molecule from PurQ to PurL. The polypeptide is Phosphoribosylformylglycinamidine synthase subunit PurL (Renibacterium salmoninarum (strain ATCC 33209 / DSM 20767 / JCM 11484 / NBRC 15589 / NCIMB 2235)).